The primary structure comprises 445 residues: Tubulin alpha-3 chain (445 aa).

Positions 11, 72, 141, 145, 146, 180, 207, and 229 each coordinate GTP. Residue Glu-72 participates in Mg(2+) binding. The active site involves Glu-255.

It belongs to the tubulin family. Dimer of alpha and beta chains. A typical microtubule is a hollow water-filled tube with an outer diameter of 25 nm and an inner diameter of 15 nM. Alpha-beta heterodimers associate head-to-tail to form protofilaments running lengthwise along the microtubule wall with the beta-tubulin subunit facing the microtubule plus end conferring a structural polarity. Microtubules usually have 13 protofilaments but different protofilament numbers can be found in some organisms and specialized cells. Interacts with NUM1. It depends on Mg(2+) as a cofactor.

It localises to the cytoplasm. It is found in the cytoskeleton. The catalysed reaction is GTP + H2O = GDP + phosphate + H(+). Tubulin is the major constituent of microtubules, a cylinder consisting of laterally associated linear protofilaments composed of alpha- and beta-tubulin heterodimers. Microtubules grow by the addition of GTP-tubulin dimers to the microtubule end, where a stabilizing cap forms. Below the cap, tubulin dimers are in GDP-bound state, owing to GTPase activity of alpha-tubulin. This chain is Tubulin alpha-3 chain (TUB3), found in Saccharomyces cerevisiae (strain ATCC 204508 / S288c) (Baker's yeast).